The sequence spans 754 residues: 5-methyltetrahydropteroyltriglutamate--homocysteine methyltransferase (754 aa).

5-methyltetrahydropteroyltri-L-glutamate-binding positions include 15–18 (RELK) and lysine 114. L-homocysteine-binding positions include 430–432 (IGS) and glutamate 483. L-methionine is bound by residues 430–432 (IGS) and glutamate 483. 5-methyltetrahydropteroyltri-L-glutamate contacts are provided by residues 514–515 (RC) and tryptophan 560. Aspartate 598 lines the L-homocysteine pocket. Residue aspartate 598 coordinates L-methionine. Glutamate 604 contributes to the 5-methyltetrahydropteroyltri-L-glutamate binding site. Positions 641, 643, and 665 each coordinate Zn(2+). The Proton donor role is filled by histidine 694. Position 726 (cysteine 726) interacts with Zn(2+).

This sequence belongs to the vitamin-B12 independent methionine synthase family. Zn(2+) is required as a cofactor.

It catalyses the reaction 5-methyltetrahydropteroyltri-L-glutamate + L-homocysteine = tetrahydropteroyltri-L-glutamate + L-methionine. The protein operates within amino-acid biosynthesis; L-methionine biosynthesis via de novo pathway; L-methionine from L-homocysteine (MetE route): step 1/1. Catalyzes the transfer of a methyl group from 5-methyltetrahydrofolate to homocysteine resulting in methionine formation. This is 5-methyltetrahydropteroyltriglutamate--homocysteine methyltransferase from Campylobacter jejuni subsp. doylei (strain ATCC BAA-1458 / RM4099 / 269.97).